The chain runs to 206 residues: MSQNELTTGDFTDEHEPFGLFETWLTEAKASEINDPNAVALATVDESGLPNVRMVLLKDFDQNGFVFYTNFESQKGTEILSQKKAAMCFHWKSLRRQVRLRGEVEVVSDAEADAYYQTRPIGSRIGAWASKQSRPLESRFALEKAVAEYTARYALGSIPRPAHWSGFRIKPLTIEFWRDGKFRLHDRIEFRREALGQPWNKVRMYP.

FMN-binding positions include 53–58 (RMVLLK), 68–69 (YT), Lys75, and Gln97. Lys58 serves as a coordination point for substrate. Substrate is bound by residues Tyr115, Arg119, and Ser123. FMN-binding positions include 132-133 (QS) and Trp177. 183 to 185 (RLH) is a substrate binding site. Arg187 provides a ligand contact to FMN.

It belongs to the pyridoxamine 5'-phosphate oxidase family. In terms of assembly, homodimer. FMN serves as cofactor.

It catalyses the reaction pyridoxamine 5'-phosphate + O2 + H2O = pyridoxal 5'-phosphate + H2O2 + NH4(+). The enzyme catalyses pyridoxine 5'-phosphate + O2 = pyridoxal 5'-phosphate + H2O2. Its pathway is cofactor metabolism; pyridoxal 5'-phosphate salvage; pyridoxal 5'-phosphate from pyridoxamine 5'-phosphate: step 1/1. The protein operates within cofactor metabolism; pyridoxal 5'-phosphate salvage; pyridoxal 5'-phosphate from pyridoxine 5'-phosphate: step 1/1. Catalyzes the oxidation of either pyridoxine 5'-phosphate (PNP) or pyridoxamine 5'-phosphate (PMP) into pyridoxal 5'-phosphate (PLP). This Allorhizobium ampelinum (strain ATCC BAA-846 / DSM 112012 / S4) (Agrobacterium vitis (strain S4)) protein is Pyridoxine/pyridoxamine 5'-phosphate oxidase.